The following is a 656-amino-acid chain: Tetratricopeptide repeat protein 30 homolog (656 aa).

TPR repeat units follow at residues 9–42 (EGEFTSTIYTLIHEHKFNDAIRILQYQHERNPKN), 43–76 (LAALSLLAYCYYYTQDFMNAADCYSQLSYNFPQY), 141–174 (AAVIINTACIDYKEGNYEEALKKFNEATEFSGYQ), 176–208 (GLAYSIALCHYRRGDYDSALKLISEIINRGVKD), 238–271 (IEAFNLKFAIYYRTKDFKAAKESLTDMPPRNEHD), 378–412 (RKTAIEIQIKKEQKTTDSDDSLEMRNLIESYDDSL), 416–449 (LPVLMTYAKYYWDKRDYQAVEKLFRNSVDYCKEH), 451–484 (TWKLNVAHTIFMQEKKYKDAAAFYEPIVHKKYDD), and 537–570 (SIISLVIGSLYCSKGNFEFGISRVVKALEPPEKK).

The protein belongs to the TTC30/dfy-1/fleer family. Component of the IFT complex B composed of at least che-2, che-13, dyf-1, dyf-3, dyf-6, dyf-11, dyf-13, ift-20, ift-74, ift-81, ifta-2, osm-1, osm-5 and osm-6. In terms of tissue distribution, expressed in most amphid, both phasmid and several labial-quadrant neurons.

It is found in the cell projection. The protein resides in the cilium. Plays a role in anterograde intraflagellar transport (IFT), the process by which cilia precursors are transported from the base of the cilium to the site of their incorporation at the tip. Specifically required for the kinesin osm-3 to dock onto and move the IFT particles which contain these precursors. Component of the intraflagellar transport (IFT) complex B required for transport of proteins in the motile cilium. May be required for ciliary entrance and transport of specific ciliary cargo proteins such as che-3 which are related to motility. Required for polyglutamylation of axonemal tubulin in sensory cilia. The chain is Tetratricopeptide repeat protein 30 homolog from Caenorhabditis elegans.